The following is a 122-amino-acid chain: Large ribosomal subunit protein uL14 (122 aa).

The protein belongs to the universal ribosomal protein uL14 family. As to quaternary structure, part of the 50S ribosomal subunit. Forms a cluster with proteins L3 and L19. In the 70S ribosome, L14 and L19 interact and together make contacts with the 16S rRNA in bridges B5 and B8.

Functionally, binds to 23S rRNA. Forms part of two intersubunit bridges in the 70S ribosome. The polypeptide is Large ribosomal subunit protein uL14 (Chlamydia trachomatis serovar A (strain ATCC VR-571B / DSM 19440 / HAR-13)).